A 737-amino-acid chain; its full sequence is Polyribonucleotide nucleotidyltransferase (737 aa).

Mg(2+) is bound by residues Asp489 and Asp495. Positions 556–615 (PKIDTIKIDVDKIKIVIGKGGETIDKIIAETGVKIDIDEEGNVSIYSSDQDAINRAKEII) constitute a KH domain. An S1 motif domain is found at 625 to 693 (DEVYRAKVVR…EKGRIDASMK (69 aa)). A disordered region spans residues 691 to 737 (SMKALLPRPPKPEHDEKGEKSERPHRPRHQKDYKPKKEFTETSKDSE). Positions 700–737 (PKPEHDEKGEKSERPHRPRHQKDYKPKKEFTETSKDSE) are enriched in basic and acidic residues.

Belongs to the polyribonucleotide nucleotidyltransferase family. Mg(2+) is required as a cofactor.

Its subcellular location is the cytoplasm. The enzyme catalyses RNA(n+1) + phosphate = RNA(n) + a ribonucleoside 5'-diphosphate. Functionally, involved in mRNA degradation. Catalyzes the phosphorolysis of single-stranded polyribonucleotides processively in the 3'- to 5'-direction. The protein is Polyribonucleotide nucleotidyltransferase of Streptococcus pneumoniae serotype 4 (strain ATCC BAA-334 / TIGR4).